Here is a 244-residue protein sequence, read N- to C-terminus: MAQVPASGKLLVDPRYSTNDQEESILQDIITRFPNVVLMKQTAQLRAMMTIIRDKETPKEEFVFYADRLIRLLIEEALNELPFEKKEVTTPLDVSYHGVSFYSKICGVSIVRAGESMESGLRAVCRGCRIGKILIQRDETTAEPKLIYEKLPADIRDRWVMLLDPMCATAGSVCKAIEVLLRLGVKEERIIFVNILAAPQGIERVFKEYPKVRMVTAAVDICLNSRYYIVPGIGDFGDRYFGTM.

GTP contacts are provided by residues lysine 59, arginine 68, and 102–105; that span reads YSKI. Arginine 112 serves as a coordination point for 5-phospho-alpha-D-ribose 1-diphosphate. Arginine 129 is a binding site for GTP. Arginine 137 contributes to the 5-phospho-alpha-D-ribose 1-diphosphate binding site. Arginine 158 contributes to the GTP binding site. Residues aspartate 164 and 164–172 contribute to the 5-phospho-alpha-D-ribose 1-diphosphate site; that span reads DPMCATAGS. Uracil is bound by residues isoleucine 229 and 234-236; that span reads GDF. Residue aspartate 235 coordinates 5-phospho-alpha-D-ribose 1-diphosphate.

The protein belongs to the UPRTase family. Monomer. Forms homodimers in presence of substrates and homotetramers in the presence of GTP. Mg(2+) is required as a cofactor.

The catalysed reaction is UMP + diphosphate = 5-phospho-alpha-D-ribose 1-diphosphate + uracil. It functions in the pathway pyrimidine metabolism; UMP biosynthesis via salvage pathway; UMP from uracil: step 1/1. Its activity is regulated as follows. Allosterically activated by GTP. Binding of GTP leads to 5-time activation of the enzyme. Functionally, catalyzes the conversion of uracil and 5-phospho-alpha-D-ribose 1-diphosphate (PRPP) to UMP and diphosphate. The sequence is that of Uracil phosphoribosyltransferase (uprt) from Toxoplasma gondii.